Here is a 172-residue protein sequence, read N- to C-terminus: Ribosome maturation factor RimM (172 aa).

The PRC barrel domain occupies 95–168 (DEGEFYYHQI…RVDVAIMEGL (74 aa)).

It belongs to the RimM family. Binds ribosomal protein uS19.

It localises to the cytoplasm. Its function is as follows. An accessory protein needed during the final step in the assembly of 30S ribosomal subunit, possibly for assembly of the head region. Essential for efficient processing of 16S rRNA. May be needed both before and after RbfA during the maturation of 16S rRNA. It has affinity for free ribosomal 30S subunits but not for 70S ribosomes. The polypeptide is Ribosome maturation factor RimM (Streptococcus uberis (strain ATCC BAA-854 / 0140J)).